The following is a 204-amino-acid chain: High frequency lysogenization protein HflD homolog (204 aa).

It belongs to the HflD family.

The protein resides in the cytoplasm. It is found in the cell inner membrane. This Shewanella amazonensis (strain ATCC BAA-1098 / SB2B) protein is High frequency lysogenization protein HflD homolog.